Consider the following 611-residue polypeptide: MQQDQRKKSSTEADFFTEYGDASRYKIQEVIGKGSYGVVCSAIDVHTGEKVAIKKIHDIFEHISDAARILREIKLLRLLRHPDIVEIKHIMLPPSRRDFKDIYVVFELMESDLHQVIKANDDLTKEHYQFFLYQLLRALKYIHTANVYHRDLKPKNILANSNCKLKICDFGLARVAFNDTPTTIFWTDYVATRWYRAPELCGSFFSKYTPAIDIWSIGCIFAEVLTGKPLFPGKNVVHQLDLMTDLLGTPSMDTISRVRNDKARRYLSSMRKKEPILFSQKFPSADPLALDLLQKLLAFDPKDRPTAEEALAHPYFKGLAKVEREPSCQPITKMEFEFERRRVTKEDIRELIFREILEYHPQLLKDYINGTERTTFLYPSAVDQFRKQFAHLEENGGNGPVIPMDRKHTSLPRSTIVHSTPIPAKEQPRIGPSRDKPSDEPYSNPREFDRFSGNAPRTSQAPQRVPTARPGRVVGPVLPYENGATKDSYDARRLAMNSGYPPQQQIPQAYGYYQIPGKSACSELSQAERYTLHQQAYTCANSATVTDVALDMRAPPFHLSGGPKSDSSERLAAETNLYTRSLNGLAATAAGVAASAHRKVGVVPYGMSRMY.

In terms of domain architecture, Protein kinase spans 25 to 316 (YKIQEVIGKG…AEEALAHPYF (292 aa)). ATP-binding positions include 31-39 (IGKGSYGVV) and lysine 54. Aspartate 151 serves as the catalytic Proton acceptor. The residue at position 187 (threonine 187) is a Phosphothreonine. Positions 187-189 (TDY) match the TXY motif. Tyrosine 189 bears the Phosphotyrosine mark. The segment at 394-481 (ENGGNGPVIP…RVVGPVLPYE (88 aa)) is disordered. The span at 426–439 (EQPRIGPSRDKPSD) shows a compositional bias: basic and acidic residues.

The protein belongs to the protein kinase superfamily. CMGC Ser/Thr protein kinase family. MAP kinase subfamily. Post-translationally, dually phosphorylated on Thr-187 and Tyr-189, which activates the enzyme.

The catalysed reaction is L-seryl-[protein] + ATP = O-phospho-L-seryl-[protein] + ADP + H(+). The enzyme catalyses L-threonyl-[protein] + ATP = O-phospho-L-threonyl-[protein] + ADP + H(+). With respect to regulation, activated by threonine and tyrosine phosphorylation. This chain is Mitogen-activated protein kinase 10 (MPK10), found in Oryza sativa subsp. japonica (Rice).